The following is a 1123-amino-acid chain: Mediator of RNA polymerase II transcription subunit 14 (1123 aa).

Residues 450–484 (KQSDASDEQQNNIEPNEESLEDLREDNNEDESEPQ) form a disordered region.

It belongs to the Mediator complex subunit 14 family. As to quaternary structure, component of the Mediator complex.

It is found in the nucleus. Component of the Mediator complex, a coactivator involved in the regulated transcription of nearly all RNA polymerase II-dependent genes. Mediator functions as a bridge to convey information from gene-specific regulatory proteins to the basal RNA polymerase II transcription machinery. Mediator is recruited to promoters by direct interactions with regulatory proteins and serves as a scaffold for the assembly of a functional preinitiation complex with RNA polymerase II and the general transcription factors. The sequence is that of Mediator of RNA polymerase II transcription subunit 14 (RGR1) from Debaryomyces hansenii (strain ATCC 36239 / CBS 767 / BCRC 21394 / JCM 1990 / NBRC 0083 / IGC 2968) (Yeast).